Reading from the N-terminus, the 367-residue chain is Dihydroxyacetone phosphate transaminase Cj1437c (367 aa).

An N6-(pyridoxal phosphate)lysine modification is found at Lys-219.

Belongs to the class-II pyridoxal-phosphate-dependent aminotransferase family. The cofactor is pyridoxal 5'-phosphate.

The enzyme catalyses dihydroxyacetone phosphate + L-glutamate = (S)-serinol phosphate + 2-oxoglutarate. The protein operates within capsule biogenesis; capsule polysaccharide biosynthesis. Pyridoxal phosphate (PLP)-dependent transaminase involved in the biosynthesis of amidated D-glucuronic acid structures found on the capsular polysaccharide (CPS) of C.jejuni. Catalyzes the transamination of dihydroxyacetone phosphate (DHAP) to (S)-serinol phosphate in the presence of L-glutamate. Less active with L-aspartate. No activity with dihydroxyacetone or L-alanine. This is Dihydroxyacetone phosphate transaminase Cj1437c from Campylobacter jejuni subsp. jejuni serotype O:2 (strain ATCC 700819 / NCTC 11168).